The chain runs to 472 residues: MREIITLSFGQTAGHINADYFNSQEHYFPLATKSTSDPTVRFRRGVATDSRTETYNPRLLTWELKGGYGAFQAFNQFYTEGDKSQPQVWNEGEIKEIKEQPVDKNEYQKALDLGRENASQLNTDTTKRWTDYNRLFHHPKTRHQLDNWLFDPDTAPQGIHRGGDQKWTGFDVGVNEWEHVLNSDKEYLDSTLRSWVEECDSLGGLNVVVDDSAWAGVAAKILANYRDDFDAKGTVVTWSVEAKPEKKTRETQKNAIQTTVALSQVSSIYIPVSFPTKTPIDADFDPTSPWHQAALFGLSVYEPVQLMATQRTGGLSLDAMAALLDTTGERNIVSEVGGTLTDVDGDKSTVQYDSRLFQELFLPSRIPPKTPHVFSDLSIARLEDQDDDANSYRLNQPMPEVSSQPEFTKQFVSSKTRLAVTTKPRRTLLDMAKFVSVYERGDEREEMKQELGDMASKYEHGWEEESDDDDDY.

The segment covering 441-463 has biased composition (basic and acidic residues); sequence GDEREEMKQELGDMASKYEHGWE. The segment at 441–472 is disordered; the sequence is GDEREEMKQELGDMASKYEHGWEEESDDDDDY.

Belongs to the misato family.

Its subcellular location is the mitochondrion. Functionally, involved in the partitioning of the mitochondrial organelle and mitochondrial DNA (mtDNA) inheritance. The polypeptide is Protein DML1 (DML1) (Yarrowia lipolytica (strain CLIB 122 / E 150) (Yeast)).